We begin with the raw amino-acid sequence, 253 residues long: Giant extracellular hemoglobin linker 1 chain (253 aa).

Residues histidine 89–isoleucine 131 enclose the LDL-receptor class A domain. 3 cysteine pairs are disulfide-bonded: cysteine 91–cysteine 105, cysteine 98–cysteine 118, and cysteine 112–cysteine 129.

Disulfide-linked dimer of identical chains. A model is proposed for the subunit structure of the Tylorrhynchus hemoglobin, consisting of 216 polypeptide chains, 192 heme-containing chains, and 24 linker chains.

In terms of biological role, acts as a linker for the assembly of heme-containing chains in the construction of giant hemoglobin. This is Giant extracellular hemoglobin linker 1 chain from Tylorrhynchus heterochetus (Japanese palolo worm).